We begin with the raw amino-acid sequence, 120 residues long: Large ribosomal subunit protein uL22 (120 aa).

Belongs to the universal ribosomal protein uL22 family. As to quaternary structure, part of the 50S ribosomal subunit.

In terms of biological role, this protein binds specifically to 23S rRNA; its binding is stimulated by other ribosomal proteins, e.g. L4, L17, and L20. It is important during the early stages of 50S assembly. It makes multiple contacts with different domains of the 23S rRNA in the assembled 50S subunit and ribosome. Its function is as follows. The globular domain of the protein is located near the polypeptide exit tunnel on the outside of the subunit, while an extended beta-hairpin is found that lines the wall of the exit tunnel in the center of the 70S ribosome. The sequence is that of Large ribosomal subunit protein uL22 from Corynebacterium diphtheriae (strain ATCC 700971 / NCTC 13129 / Biotype gravis).